A 166-amino-acid polypeptide reads, in one-letter code: uncharacterized protein (166 aa).

3 4Fe-4S ferredoxin-type domains span residues 3–33 (MKKI…GRIA), 37–67 (KDGK…EHKD), and 68–97 (GYVY…MEDK). Residues C13, C16, C19, C23, C46, C49, C54, C58, C77, C80, C83, C87, C101, C104, C111, and C115 each contribute to the [4Fe-4S] cluster site.

It depends on [4Fe-4S] cluster as a cofactor.

This is an uncharacterized protein from Methanocaldococcus jannaschii (strain ATCC 43067 / DSM 2661 / JAL-1 / JCM 10045 / NBRC 100440) (Methanococcus jannaschii).